A 203-amino-acid polypeptide reads, in one-letter code: MRGKFICLDGTEGSGKSSQIQAICSFLQQHGKTVITTREPGGTQIGEAIRELVLSPHYQPQALTELLLILAARHEHLQTVILPHLAAGTWVISDRFNDATYAYQGYGRGIDLKIIKTLEQIIQASFQPDLACILCLPEHIAAERVHNRAHDHDRIELENRAFFARVAQGYHARAQLPHARFIDASGDQNSVFQQIRHHLELLL.

G10 to S17 is an ATP binding site.

The protein belongs to the thymidylate kinase family.

It catalyses the reaction dTMP + ATP = dTDP + ADP. Phosphorylation of dTMP to form dTDP in both de novo and salvage pathways of dTTP synthesis. The sequence is that of Thymidylate kinase from Dichelobacter nodosus (strain VCS1703A).